Here is a 106-residue protein sequence, read N- to C-terminus: Transcription initiation factor IIA subunit 2 (106 aa).

The protein belongs to the TFIIA subunit 2 family. As to quaternary structure, TFIIA is a heterodimer of the large unprocessed subunit 1 and a small subunit gamma. It was originally believed to be a heterotrimer of an alpha (p30), a beta (p20) and a gamma (p14) subunit. Forms a complex with Moonshiner/CG12721 and Trf2. As to expression, ubiquitous.

The protein resides in the nucleus. TFIIA is a component of the transcription machinery of RNA polymerase II and plays an important role in transcriptional activation. TFIIA in a complex with TBP mediates transcriptional activity. Part of a rhi-dependent transcription machinery that enables the generation of piRNA precursors from heterochromatin while maintaining the suppression of transposon-encoded promoters and enhancers. Forms a complex with Moonshiner/CG12721 and Trf2 which recruit transcriptional machinery to heterochromatin to initiate the bidirectional transcription of piRNA clusters, by interacting with the RDC (rhi, del and cuff) complex that binds to repressive H3K9me3 marks in the chromatin. This mechanism allows transcription to occur in piRNA clusters despite the lack of proper promoter elements and in the presence of the repressive H3K9me3 mark. The sequence is that of Transcription initiation factor IIA subunit 2 (TfIIA-S) from Drosophila melanogaster (Fruit fly).